The primary structure comprises 106 residues: Large ribosomal subunit protein uL24 (106 aa).

This sequence belongs to the universal ribosomal protein uL24 family. Part of the 50S ribosomal subunit.

Functionally, one of two assembly initiator proteins, it binds directly to the 5'-end of the 23S rRNA, where it nucleates assembly of the 50S subunit. In terms of biological role, one of the proteins that surrounds the polypeptide exit tunnel on the outside of the subunit. This is Large ribosomal subunit protein uL24 from Polaromonas naphthalenivorans (strain CJ2).